Reading from the N-terminus, the 206-residue chain is Thymidylate kinase (206 aa).

11–18 (GIDGAGKT) is an ATP binding site.

Belongs to the thymidylate kinase family.

The enzyme catalyses dTMP + ATP = dTDP + ADP. Functionally, phosphorylation of dTMP to form dTDP in both de novo and salvage pathways of dTTP synthesis. The protein is Thymidylate kinase of Burkholderia lata (strain ATCC 17760 / DSM 23089 / LMG 22485 / NCIMB 9086 / R18194 / 383).